Consider the following 614-residue polypeptide: MLVALVVLFLSVFMAMKFLYKRIFVASRLKMIEKPSEDWEPASREAMIERLRSEVFDLVVVGGGSTGAGCALDGATRGLKVALVDAGDFGSGTSSKSTKLVHGGVRYLAKAVSNLDWSQYKLVWQALGERTTMFEISPYLTNSIKIMVPIYSKILIPYYYVGLKLYDWISGFKSLGKSYFIDRKEAVDAFPHINKKNLCGAMVYFDGQQDDARNNVMIVMTAVCHGAVAANHVSARSLMIEGGKIVGVRCRDEITGSEIEIRGTGVINSTGNLADDLRRMDDADAREIIVQSSGTHIVIPKEYAPKEMGFLDPLTSDNRIAFFMPWMGKTIVGSTDIKTKTELSPSPTEEDLEFLIHEVQAYTSMHPKLTRDEVSAVWTGIRPLVKDPDVSDTGSIVRKHFVRIEKNGLLTVTGGKWTIYRKMAEDAIDLAISAFSLKPSGPCVTKYVRILGGDGYTKNTWASIQKELGVPKNVAERLARSYGTRALRLSSYIKKNRKKVLSVKYSYLIEEVEYCIDNEMAVKVCDVLCNRLMIGLMDVKEAYQCIDKVLGVFKKKHGWDADRCNREEADAIRMLDKYGLQILRGCGQDASSLQMECPEEKRHRGERRLPPQEK.

An FAD-binding site is contributed by 57–85 (DLVVVGGGSTGAGCALDGATRGLKVALVD). Positions 595 to 614 (MECPEEKRHRGERRLPPQEK) are disordered. The span at 598–614 (PEEKRHRGERRLPPQEK) shows a compositional bias: basic and acidic residues.

This sequence belongs to the FAD-dependent glycerol-3-phosphate dehydrogenase family. FAD serves as cofactor.

The protein localises to the cytoplasm. The catalysed reaction is a quinone + sn-glycerol 3-phosphate = dihydroxyacetone phosphate + a quinol. It functions in the pathway polyol metabolism; glycerol degradation via glycerol kinase pathway; glycerone phosphate from sn-glycerol 3-phosphate (anaerobic route): step 1/1. The protein is Probable glycerol-3-phosphate dehydrogenase of Encephalitozoon cuniculi (strain GB-M1) (Microsporidian parasite).